The following is a 68-amino-acid chain: Translational regulator CsrA 1 (68 aa).

Belongs to the CsrA/RsmA family. In terms of assembly, homodimer; the beta-strands of each monomer intercalate to form a hydrophobic core, while the alpha-helices form wings that extend away from the core.

It localises to the cytoplasm. Its function is as follows. A key translational regulator that binds mRNA to regulate translation initiation and/or mRNA stability. Mediates global changes in gene expression, shifting from rapid growth to stress survival by linking envelope stress, the stringent response and the catabolite repression systems. Usually binds in the 5'-UTR; binding at or near the Shine-Dalgarno sequence prevents ribosome-binding, repressing translation, binding elsewhere in the 5'-UTR can activate translation and/or stabilize the mRNA. Its function is antagonized by small RNA(s). The sequence is that of Translational regulator CsrA 1 from Coxiella burnetii (strain RSA 493 / Nine Mile phase I).